The following is a 234-amino-acid chain: Cyclo(L-leucyl-L-leucyl) synthase (234 aa).

Catalysis depends on S33, which acts as the Nucleophile. Substrate is bound by residues N36, 179 to 183, Y203, and 208 to 209; these read YIFAE and SI.

It belongs to the CDPS family.

It catalyses the reaction 2 L-leucyl-tRNA(Leu) = cyclo(L-leucyl-L-leucyl) + 2 tRNA(Leu) + 2 H(+). It uses activated amino acids in the form of aminoacyl-tRNAs (aa-tRNAs) as substrates to catalyze the ATP-independent formation of cyclodipeptides which are intermediates in diketopiperazine (DKP) biosynthetic pathways. Catalyzes the formation of cyclo(L-Leu-L-Leu) (cLL) from L-leucyl-tRNA(Leu). Can incorporate various nonpolar residues, such as L-phenylalanine, L-leucine and L-methionine, into cyclodipeptides. This Photorhabdus laumondii subsp. laumondii (strain DSM 15139 / CIP 105565 / TT01) (Photorhabdus luminescens subsp. laumondii) protein is Cyclo(L-leucyl-L-leucyl) synthase.